The chain runs to 163 residues: NADH-quinone oxidoreductase subunit I (163 aa).

2 4Fe-4S ferredoxin-type domains span residues 55 to 84 and 94 to 123; these read RRYE…IESE and TQYD…ETRV. Residues Cys-64, Cys-67, Cys-70, Cys-74, Cys-103, Cys-106, Cys-109, and Cys-113 each contribute to the [4Fe-4S] cluster site.

It belongs to the complex I 23 kDa subunit family. As to quaternary structure, NDH-1 is composed of 14 different subunits. Subunits NuoA, H, J, K, L, M, N constitute the membrane sector of the complex. [4Fe-4S] cluster is required as a cofactor.

The protein localises to the cell inner membrane. The enzyme catalyses a quinone + NADH + 5 H(+)(in) = a quinol + NAD(+) + 4 H(+)(out). In terms of biological role, NDH-1 shuttles electrons from NADH, via FMN and iron-sulfur (Fe-S) centers, to quinones in the respiratory chain. The immediate electron acceptor for the enzyme in this species is believed to be ubiquinone. Couples the redox reaction to proton translocation (for every two electrons transferred, four hydrogen ions are translocated across the cytoplasmic membrane), and thus conserves the redox energy in a proton gradient. This is NADH-quinone oxidoreductase subunit I from Hydrogenovibrio crunogenus (strain DSM 25203 / XCL-2) (Thiomicrospira crunogena).